A 179-amino-acid chain; its full sequence is uncharacterized protein (179 aa).

Positions Ala-1–Ser-10 are enriched in polar residues. Disordered regions lie at residues Ala-1–Cys-35, Val-59–Thr-80, and Glu-131–Arg-179. Positions Leu-23–Gly-33 are enriched in basic residues. Over residues Thr-149–Arg-158 the composition is skewed to basic residues.

This is an uncharacterized protein from Human cytomegalovirus (strain AD169) (HHV-5).